The sequence spans 194 residues: Recombination protein RecR (194 aa).

A C4-type zinc finger spans residues 55–70 (CRECGNLAEGELCPIC). The Toprim domain maps to 78 to 171 (SLLAVVESVA…RVTRPAYGLP (94 aa)).

The protein belongs to the RecR family.

Functionally, may play a role in DNA repair. It seems to be involved in an RecBC-independent recombinational process of DNA repair. It may act with RecF and RecO. This Thermus thermophilus (strain ATCC BAA-163 / DSM 7039 / HB27) protein is Recombination protein RecR.